The chain runs to 147 residues: Hemoglobin subunit beta-1/2 (147 aa).

Valine 2 carries the N-acetylvaline modification. The region spanning 3-147 (HLSSEEKSAV…VANALAHKYH (145 aa)) is the Globin domain. Threonine 13 carries the phosphothreonine modification. Residue serine 45 is modified to Phosphoserine. Lysine 60 bears the N6-acetyllysine mark. Histidine 64 provides a ligand contact to heme b. N6-acetyllysine is present on lysine 83. Histidine 93 lines the heme b pocket. Cysteine 94 is subject to S-nitrosocysteine. The residue at position 145 (lysine 145) is an N6-acetyllysine.

This sequence belongs to the globin family. As to quaternary structure, heterotetramer of two alpha chains and two beta chains. As to expression, red blood cells.

Involved in oxygen transport from the lung to the various peripheral tissues. The polypeptide is Hemoglobin subunit beta-1/2 (HBB1) (Oryctolagus cuniculus (Rabbit)).